A 761-amino-acid polypeptide reads, in one-letter code: Putative pentatricopeptide repeat-containing protein At2g02150 (761 aa).

PPR repeat units lie at residues 141-175 (SVESYCIVAHILFCARMYYDANSVLKEMVLSKADC), 191-225 (GFGVFDALFSVLIDLGMLEEAIQCFSKMKRFRVFP), 226-260 (KTRSCNGLLHRFAKLGKTDDVKRFFKDMIGAGARP), 261-295 (TVFTYNIMIDCMCKEGDVEAARGLFEEMKFRGLVP), 296-330 (DTVTYNSMIDGFGKVGRLDDTVCFFEEMKDMCCEP), 331-365 (DVITYNALINCFCKFGKLPIGLEFYREMKGNGLKP), 366-400 (NVVSYSTLVDAFCKEGMMQQAIKFYVDMRRVGLVP), 401-435 (NEYTYTSLIDANCKIGNLSDAFRLGNEMLQVGVEW), 436-470 (NVVTYTALIDGLCDAERMKEAEELFGKMDTAGVIP), 471-505 (NLASYNALIHGFVKAKNMDRALELLNELKGRGIKP), 506-540 (DLLLYGTFIWGLCSLEKIEAAKVVMNEMKECGIKA), 541-575 (NSLIYTTLMDAYFKSGNPTEGLHLLDEMKELDIEV), 576-606 (TVVTFCVLIDGLCKNKLVSKAVDYFNRISND), 612-646 (NAAIFTAMIDGLCKDNQVEAATTLFEQMVQKGLVP), 647-681 (DRTAYTSLMDGNFKQGNVLEALALRDKMAEIGMKL), 682-716 (DLLAYTSLVWGLSHCNQLQKARSFLEEMIGEGIHP), and 717-751 (DEVLCISVLKKHYELGCIDEAVELQSYLMKHQLLT).

Belongs to the PPR family. P subfamily.

This Arabidopsis thaliana (Mouse-ear cress) protein is Putative pentatricopeptide repeat-containing protein At2g02150.